Here is a 256-residue protein sequence, read N- to C-terminus: Thiazole synthase (256 aa).

K95 (schiff-base intermediate with DXP) is an active-site residue. Residues G156, 182 to 183 (AG), and 204 to 205 (NT) each bind 1-deoxy-D-xylulose 5-phosphate.

Belongs to the ThiG family. Homotetramer. Forms heterodimers with either ThiH or ThiS.

It localises to the cytoplasm. It carries out the reaction [ThiS sulfur-carrier protein]-C-terminal-Gly-aminoethanethioate + 2-iminoacetate + 1-deoxy-D-xylulose 5-phosphate = [ThiS sulfur-carrier protein]-C-terminal Gly-Gly + 2-[(2R,5Z)-2-carboxy-4-methylthiazol-5(2H)-ylidene]ethyl phosphate + 2 H2O + H(+). It functions in the pathway cofactor biosynthesis; thiamine diphosphate biosynthesis. Catalyzes the rearrangement of 1-deoxy-D-xylulose 5-phosphate (DXP) to produce the thiazole phosphate moiety of thiamine. Sulfur is provided by the thiocarboxylate moiety of the carrier protein ThiS. In vitro, sulfur can be provided by H(2)S. The sequence is that of Thiazole synthase from Photobacterium profundum (strain SS9).